The primary structure comprises 482 residues: Bifunctional protein HldE (482 aa).

Residues 1–322 are ribokinase; the sequence is MFGLESKSPK…QYIHTQPSNL (322 aa). Residue 198–201 coordinates ATP; that stretch reads NKKE. Residue Asp-267 is part of the active site. The segment at 350-482 is cytidylyltransferase; sequence FTNGCFDILH…IQRSKICKHS (133 aa).

The protein in the N-terminal section; belongs to the carbohydrate kinase PfkB family. In the C-terminal section; belongs to the cytidylyltransferase family. As to quaternary structure, homodimer.

It catalyses the reaction D-glycero-beta-D-manno-heptose 7-phosphate + ATP = D-glycero-beta-D-manno-heptose 1,7-bisphosphate + ADP + H(+). The enzyme catalyses D-glycero-beta-D-manno-heptose 1-phosphate + ATP + H(+) = ADP-D-glycero-beta-D-manno-heptose + diphosphate. It participates in nucleotide-sugar biosynthesis; ADP-L-glycero-beta-D-manno-heptose biosynthesis; ADP-L-glycero-beta-D-manno-heptose from D-glycero-beta-D-manno-heptose 7-phosphate: step 1/4. The protein operates within nucleotide-sugar biosynthesis; ADP-L-glycero-beta-D-manno-heptose biosynthesis; ADP-L-glycero-beta-D-manno-heptose from D-glycero-beta-D-manno-heptose 7-phosphate: step 3/4. Its pathway is bacterial outer membrane biogenesis; LPS core biosynthesis. In terms of biological role, catalyzes the phosphorylation of D-glycero-D-manno-heptose 7-phosphate at the C-1 position to selectively form D-glycero-beta-D-manno-heptose-1,7-bisphosphate. Its function is as follows. Catalyzes the ADP transfer from ATP to D-glycero-beta-D-manno-heptose 1-phosphate, yielding ADP-D-glycero-beta-D-manno-heptose. The chain is Bifunctional protein HldE from Helicobacter hepaticus (strain ATCC 51449 / 3B1).